The primary structure comprises 295 residues: Protease HtpX homolog (295 aa).

A run of 2 helical transmembrane segments spans residues 6-26 and 40-60; these read IGLF…VTSV and LSSL…VSLL. His-148 contacts Zn(2+). Glu-149 is an active-site residue. His-152 is a Zn(2+) binding site. A run of 2 helical transmembrane segments spans residues 163–183 and 198–218; these read LIQG…SYAL and IANI…VAYF. Residue Glu-223 participates in Zn(2+) binding.

The protein belongs to the peptidase M48B family. Zn(2+) is required as a cofactor.

It localises to the cell inner membrane. This chain is Protease HtpX homolog, found in Leptospira interrogans serogroup Icterohaemorrhagiae serovar copenhageni (strain Fiocruz L1-130).